Here is a 323-residue protein sequence, read N- to C-terminus: Lipoyl synthase (323 aa).

The segment at 1–27 (MVTILDRTSSDEKRIRHPEKAHRPDTE) is disordered. [4Fe-4S] cluster-binding residues include cysteine 61, cysteine 66, cysteine 72, cysteine 87, cysteine 91, cysteine 94, and serine 300. A Radical SAM core domain is found at 73–289 (WEKKHATFMI…ETVAYAKGFL (217 aa)).

The protein belongs to the radical SAM superfamily. Lipoyl synthase family. It depends on [4Fe-4S] cluster as a cofactor.

The protein resides in the cytoplasm. It carries out the reaction [[Fe-S] cluster scaffold protein carrying a second [4Fe-4S](2+) cluster] + N(6)-octanoyl-L-lysyl-[protein] + 2 oxidized [2Fe-2S]-[ferredoxin] + 2 S-adenosyl-L-methionine + 4 H(+) = [[Fe-S] cluster scaffold protein] + N(6)-[(R)-dihydrolipoyl]-L-lysyl-[protein] + 4 Fe(3+) + 2 hydrogen sulfide + 2 5'-deoxyadenosine + 2 L-methionine + 2 reduced [2Fe-2S]-[ferredoxin]. It functions in the pathway protein modification; protein lipoylation via endogenous pathway; protein N(6)-(lipoyl)lysine from octanoyl-[acyl-carrier-protein]: step 2/2. Its function is as follows. Catalyzes the radical-mediated insertion of two sulfur atoms into the C-6 and C-8 positions of the octanoyl moiety bound to the lipoyl domains of lipoate-dependent enzymes, thereby converting the octanoylated domains into lipoylated derivatives. The polypeptide is Lipoyl synthase (Agrobacterium fabrum (strain C58 / ATCC 33970) (Agrobacterium tumefaciens (strain C58))).